Reading from the N-terminus, the 555-residue chain is Formate--tetrahydrofolate ligase (555 aa).

Position 64-71 (64-71 (TKAGIGKT)) interacts with ATP.

It belongs to the formate--tetrahydrofolate ligase family.

It catalyses the reaction (6S)-5,6,7,8-tetrahydrofolate + formate + ATP = (6R)-10-formyltetrahydrofolate + ADP + phosphate. It functions in the pathway one-carbon metabolism; tetrahydrofolate interconversion. This chain is Formate--tetrahydrofolate ligase, found in Phocaeicola vulgatus (strain ATCC 8482 / DSM 1447 / JCM 5826 / CCUG 4940 / NBRC 14291 / NCTC 11154) (Bacteroides vulgatus).